Consider the following 121-residue polypeptide: ATP synthase epsilon chain (121 aa).

The protein belongs to the ATPase epsilon chain family. In terms of assembly, F-type ATPases have 2 components, CF(1) - the catalytic core - and CF(0) - the membrane proton channel. CF(1) has five subunits: alpha(3), beta(3), gamma(1), delta(1), epsilon(1). CF(0) has three main subunits: a, b and c.

The protein resides in the cell membrane. Functionally, produces ATP from ADP in the presence of a proton gradient across the membrane. The polypeptide is ATP synthase epsilon chain (Mycolicibacterium smegmatis (strain ATCC 700084 / mc(2)155) (Mycobacterium smegmatis)).